The primary structure comprises 604 residues: Complement factor I (604 aa).

A signal peptide spans 1–18 (MKLALLILLLLNPHLSSS). 20 disulfides stabilise this stretch: C36–C260, C46–C57, C51–C62, C64–C96, C70–C89, C78–C109, C144–C186, C157–C219, C191–C201, C234–C252, C246–C261, C264–C276, C271–C289, C283–C298, C349–C474, C387–C403, C395–C465, C488–C552, C516–C531, and C542–C571. A glycan (N-linked (GlcNAc...) asparagine) is linked at N40. The Kazal-like domain occupies 58-111 (IEGTCACKLPYQCPKAGTPVCATNGRGYPTYCHLKSFECLHPEIKFSNNGTCTA). N-linked (GlcNAc...) asparagine glycans are attached at residues N106, N116, and N182. The 101-residue stretch at 117–217 (VSLIYGSTDT…SKAPHGLAGV (101 aa)) folds into the SRCR domain. 2 consecutive LDL-receptor class A domains span residues 218 to 262 (VCYT…LCCK) and 263 to 299 (GCRG…SGCE). The Ca(2+) site is built by K244, D247, V249, D251, D257, and E258. 5 residues coordinate Ca(2+): N284, E286, D288, D294, and E295. The 234-residue stretch at 362-595 (VVGGKPAEMG…YFDWISYYVG (234 aa)) folds into the Peptidase S1 domain. Active-site charge relay system residues include H402 and D450. N-linked (GlcNAc...) asparagine glycosylation occurs at N515. S546 functions as the Charge relay system in the catalytic mechanism. Residue N557 is glycosylated (N-linked (GlcNAc...) asparagine).

This sequence belongs to the peptidase S1 family. As to quaternary structure, heterodimer of a light and heavy chains; disulfide-linked. The fully processed and mature protein circulates as a zymogen, and is allosterically activated by substrate-induced remodeling of the active site. Interacts with C3b. Interacts with complement factor H. Expressed in the liver by hepatocytes. Also present in other cells such as monocytes, fibroblasts or keratinocytes.

Its subcellular location is the secreted. The protein localises to the extracellular space. It carries out the reaction Inactivates complement subcomponents C3b, iC3b and C4b by proteolytic cleavage.. Its function is as follows. Trypsin-like serine protease that plays an essential role in regulating the immune response by controlling all complement pathways. Inhibits these pathways by cleaving three peptide bonds in the alpha-chain of C3b and two bonds in the alpha-chain of C4b thereby inactivating these proteins. Essential cofactors for these reactions include factor H and C4BP in the fluid phase and membrane cofactor protein/CD46 and CR1 on cell surfaces. The presence of these cofactors on healthy cells allows degradation of deposited C3b by CFI in order to prevent undesired complement activation, while in apoptotic cells or microbes, the absence of such cofactors leads to C3b-mediated complement activation and subsequent opsonization. This Rattus norvegicus (Rat) protein is Complement factor I (Cfi).